Reading from the N-terminus, the 148-residue chain is MGRFIFVSFGLLVVFLSLSGTGAALNCASGWSGYDQHCYKVFDKPKSWADAEKFCKKQTSGGHLVSFHSSEETDFVVKLVSQTLESQILWMGLSKVWNQCDWGWSNGAKLKYKAWAEESYCVYFSSTKKGWRSRACRLLGHFVCKSPA.

A signal peptide spans 1–24 (MGRFIFVSFGLLVVFLSLSGTGAA). Cystine bridges form between C27–C38, C55–C144, and C121–C136. In terms of domain architecture, C-type lectin spans 34-145 (YDQHCYKVFD…CRLLGHFVCK (112 aa)).

This sequence belongs to the snaclec family. As to quaternary structure, heterodimer; disulfide-linked. In terms of tissue distribution, expressed by the venom gland.

Its subcellular location is the secreted. Interferes with one step of hemostasis (modulation of platelet aggregation, or coagulation cascade, for example). The sequence is that of Snaclec B3/B5 from Macrovipera lebetinus (Levantine viper).